Reading from the N-terminus, the 513-residue chain is 2-isopropylmalate synthase (513 aa).

The Pyruvate carboxyltransferase domain occupies 5 to 268 (LIIFDTTLRD…DVGIDTTQIV (264 aa)). Residues D14, H202, H204, and N239 each coordinate Mn(2+). The regulatory domain stretch occupies residues 394–513 (RFISLSQRSE…KAVQKINPQI (120 aa)).

It belongs to the alpha-IPM synthase/homocitrate synthase family. LeuA type 1 subfamily. Homodimer. It depends on Mn(2+) as a cofactor.

It localises to the cytoplasm. It carries out the reaction 3-methyl-2-oxobutanoate + acetyl-CoA + H2O = (2S)-2-isopropylmalate + CoA + H(+). It participates in amino-acid biosynthesis; L-leucine biosynthesis; L-leucine from 3-methyl-2-oxobutanoate: step 1/4. In terms of biological role, catalyzes the condensation of the acetyl group of acetyl-CoA with 3-methyl-2-oxobutanoate (2-ketoisovalerate) to form 3-carboxy-3-hydroxy-4-methylpentanoate (2-isopropylmalate). The chain is 2-isopropylmalate synthase from Cupriavidus metallidurans (strain ATCC 43123 / DSM 2839 / NBRC 102507 / CH34) (Ralstonia metallidurans).